The sequence spans 365 residues: Phosphatidylcholine:ceramide cholinephosphotransferase 2 (365 aa).

Residues 1–14 (MDIIETAKLEEHLE) are compositionally biased toward basic and acidic residues. The interval 1-52 (MDIIETAKLEEHLENQPSDPTNTYTRPTEPVEEENKNGNGKPKSLSSGLRKG) is disordered. Positions 15-26 (NQPSDPTNTYTR) are enriched in polar residues. Helical transmembrane passes span 80-100 (GIAF…ITVV), 128-148 (FSVS…QWLF), 159-179 (FCFI…VTTL), 218-240 (HILC…YLFI), and 248-268 (FWWY…CILV). The active site involves His229. Residues His272 and Asp276 contribute to the active site. Residues 273–290 (YTVDVIIAYYITTRLFWW) traverse the membrane as a helical segment. Topologically, residues 291-365 (YHSMANEKNL…KIGEDNEKST (75 aa)) are cytoplasmic. S-palmitoyl cysteine attachment occurs at residues Cys331, Cys332, Cys343, and Cys348.

Belongs to the sphingomyelin synthase family. Post-translationally, palmitoylated on Cys-331, Cys-332, Cys-343 and Cys-348; which plays an important role in plasma membrane localization.

It is found in the cell membrane. It localises to the golgi apparatus membrane. The enzyme catalyses an N-acylsphing-4-enine + a 1,2-diacyl-sn-glycero-3-phosphocholine = a sphingomyelin + a 1,2-diacyl-sn-glycerol. The catalysed reaction is an N-acylsphinganine + a 1,2-diacyl-sn-glycero-3-phosphocholine = an N-acylsphinganine-1-phosphocholine + a 1,2-diacyl-sn-glycerol. It carries out the reaction an N-acyl-(4R)-4-hydroxysphinganine + a 1,2-diacyl-sn-glycero-3-phosphocholine = an N-acyl-(4R)-4-hydroxysphinganine-phosphocholine + a 1,2-diacyl-sn-glycerol. It catalyses the reaction an N-acylsphing-4-enine + a 1,2-diacyl-sn-glycero-3-phosphoethanolamine = an N-acylsphing-4-enine 1-phosphoethanolamine + a 1,2-diacyl-sn-glycerol. The enzyme catalyses an N-acylsphinganine + a 1,2-diacyl-sn-glycero-3-phosphoethanolamine = an N-acylsphinganine-1-phosphoethanolamine + a 1,2-diacyl-sn-glycerol. The catalysed reaction is an N-acyl-(4R)-4-hydroxysphinganine + a 1,2-diacyl-sn-glycero-3-phosphoethanolamine = an N-acyl-(4R)-4-hydroxysphinganine-1-phosphoethanolamine + a 1,2-diacyl-sn-glycerol. It carries out the reaction 1,2-dihexadecanoyl-sn-glycero-3-phosphocholine + an N-acylsphing-4-enine = 1,2-dihexadecanoyl-sn-glycerol + a sphingomyelin. It catalyses the reaction 1-(9Z-octadecenoyl)-2-acyl-sn-3-glycerol + a sphingomyelin = a 1-(9Z-octadecenoyl)-2-acyl-sn-glycero-3-phosphocholine + an N-acylsphing-4-enine. The enzyme catalyses N-hexadecanoylsphinganine + a 1,2-diacyl-sn-glycero-3-phosphocholine = N-hexadecanoyl-sphinganine-1-phosphocholine + a 1,2-diacyl-sn-glycerol. The catalysed reaction is N-hexadecanoyl-(4R)-hydroxysphinganine + a 1,2-diacyl-sn-glycero-3-phosphocholine = N-hexadecanoyl-(4R)-hydroxysphinganine-phosphocholine + a 1,2-diacyl-sn-glycerol. It carries out the reaction N-hexadecanoylsphinganine + a 1,2-diacyl-sn-glycero-3-phosphoethanolamine = N-hexadecanoyl-sphinganine-1-phosphoethanolamine + a 1,2-diacyl-sn-glycerol. It catalyses the reaction N-hexadecanoyl-(4R)-hydroxysphinganine + a 1,2-diacyl-sn-glycero-3-phosphoethanolamine = N-hexadecanoyl-(4R)-hydroxysphinganine-1-phosphoethanolamine + a 1,2-diacyl-sn-glycerol. It functions in the pathway sphingolipid metabolism. Its function is as follows. Sphingomyelin synthase that primarily contributes to sphingomyelin synthesis and homeostasis at the plasma membrane. Catalyzes the reversible transfer of phosphocholine moiety in sphingomyelin biosynthesis: in the forward reaction transfers phosphocholine head group of phosphatidylcholine (PC) on to ceramide (CER) to form ceramide phosphocholine (sphingomyelin, SM) and diacylglycerol (DAG) as by-product, and in the reverse reaction transfers phosphocholine from SM to DAG to form PC and CER. The direction of the reaction appears to depend on the levels of CER and DAG in the plasma membrane. Does not use free phosphorylcholine or CDP-choline as donors. Can also transfer phosphoethanolamine head group of phosphatidylethanolamine (PE) on to ceramide (CER) to form ceramide phosphoethanolamine (CPE). Regulates receptor-mediated signal transduction via mitogenic DAG and proapoptotic CER, as well as via SM, a structural component of membrane rafts that serve as platforms for signal transduction and protein sorting. To a lesser extent, plays a role in secretory transport via regulation of DAG pool at the Golgi apparatus and its downstream effects on PRKD1. Required for normal bone matrix mineralization. In Macaca fascicularis (Crab-eating macaque), this protein is Phosphatidylcholine:ceramide cholinephosphotransferase 2 (SGMS2).